We begin with the raw amino-acid sequence, 315 residues long: Glutamyl-Q tRNA(Asp) synthetase (315 aa).

Residues 21–25 (RFAPS) and E63 contribute to the L-glutamate site. The 'HIGH' region signature appears at 24-34 (PSPSGLLHFGS). 4 residues coordinate Zn(2+): C119, C121, Y133, and C137. L-glutamate is bound by residues Y190 and R208. The short motif at 251–255 (KLSKQ) is the 'KMSKS' region element. K254 contacts ATP.

Belongs to the class-I aminoacyl-tRNA synthetase family. GluQ subfamily. Zn(2+) serves as cofactor.

Catalyzes the tRNA-independent activation of glutamate in presence of ATP and the subsequent transfer of glutamate onto a tRNA(Asp). Glutamate is transferred on the 2-amino-5-(4,5-dihydroxy-2-cyclopenten-1-yl) moiety of the queuosine in the wobble position of the QUC anticodon. This Colwellia psychrerythraea (strain 34H / ATCC BAA-681) (Vibrio psychroerythus) protein is Glutamyl-Q tRNA(Asp) synthetase.